The chain runs to 232 residues: Probable anion ABC transporter permease protein HVO_1887 (232 aa).

Positions Thr-16–Gly-217 constitute an ABC transmembrane type-1 domain. 5 helical membrane-spanning segments follow: residues Ser-23 to Phe-43, Val-55 to Leu-75, Met-93 to Val-113, Ile-146 to Ile-166, and Thr-198 to Ala-218.

Belongs to the binding-protein-dependent transport system permease family. In terms of assembly, the complex is composed of two ATP-binding proteins (HVO_1886), two transmembrane proteins (HVO_1887) and a solute-binding protein (HVO_1888).

Its subcellular location is the cell membrane. In terms of biological role, part of an ABC transporter complex involved in anions import. Responsible for the translocation of the substrate across the membrane. The sequence is that of Probable anion ABC transporter permease protein HVO_1887 from Haloferax volcanii (strain ATCC 29605 / DSM 3757 / JCM 8879 / NBRC 14742 / NCIMB 2012 / VKM B-1768 / DS2) (Halobacterium volcanii).